The chain runs to 98 residues: NADH-ubiquinone oxidoreductase chain 4L (98 aa).

The next 3 helical transmembrane spans lie at 1 to 21 (MPLIYMNITLAFAISLLGMLI), 29 to 49 (SLLCLEGMMLSLFIMSTLMAL), and 61 to 81 (VVLLVFAACEAAVGLALLVSI).

The protein belongs to the complex I subunit 4L family. As to quaternary structure, core subunit of respiratory chain NADH dehydrogenase (Complex I) which is composed of 45 different subunits.

It localises to the mitochondrion inner membrane. It carries out the reaction a ubiquinone + NADH + 5 H(+)(in) = a ubiquinol + NAD(+) + 4 H(+)(out). Functionally, core subunit of the mitochondrial membrane respiratory chain NADH dehydrogenase (Complex I) which catalyzes electron transfer from NADH through the respiratory chain, using ubiquinone as an electron acceptor. Part of the enzyme membrane arm which is embedded in the lipid bilayer and involved in proton translocation. In Hylobates lar (Lar gibbon), this protein is NADH-ubiquinone oxidoreductase chain 4L (MT-ND4L).